We begin with the raw amino-acid sequence, 617 residues long: Probable translation initiation factor IF-2 (617 aa).

In terms of domain architecture, tr-type G spans 14-231 (LRQPIVVVLG…VLAGLTQTYL (218 aa)). The interval 23–30 (GHVDHGKT) is G1. A GTP-binding site is contributed by 23-30 (GHVDHGKT). A G2 region spans residues 48-52 (GITQH). The G3 stretch occupies residues 87-90 (DTPG). GTP contacts are provided by residues 87–91 (DTPGH) and 141–144 (NKID). Residues 141-144 (NKID) form a G4 region. Residues 209–211 (SAR) are G5.

This sequence belongs to the TRAFAC class translation factor GTPase superfamily. Classic translation factor GTPase family. IF-2 subfamily.

In terms of biological role, function in general translation initiation by promoting the binding of the formylmethionine-tRNA to ribosomes. Seems to function along with eIF-2. This Aeropyrum pernix (strain ATCC 700893 / DSM 11879 / JCM 9820 / NBRC 100138 / K1) protein is Probable translation initiation factor IF-2 (infB).